A 604-amino-acid chain; its full sequence is Elongation factor 4 (604 aa).

Positions 8-190 (DKIRNFSIIA…AIVNRLPPPR (183 aa)) constitute a tr-type G domain. GTP is bound by residues 20–25 (DHGKST) and 137–140 (NKID).

Belongs to the TRAFAC class translation factor GTPase superfamily. Classic translation factor GTPase family. LepA subfamily.

Its subcellular location is the cell inner membrane. The catalysed reaction is GTP + H2O = GDP + phosphate + H(+). In terms of biological role, required for accurate and efficient protein synthesis under certain stress conditions. May act as a fidelity factor of the translation reaction, by catalyzing a one-codon backward translocation of tRNAs on improperly translocated ribosomes. Back-translocation proceeds from a post-translocation (POST) complex to a pre-translocation (PRE) complex, thus giving elongation factor G a second chance to translocate the tRNAs correctly. Binds to ribosomes in a GTP-dependent manner. The sequence is that of Elongation factor 4 from Hyphomonas neptunium (strain ATCC 15444).